Here is a 260-residue protein sequence, read N- to C-terminus: Cytochrome c oxidase subunit 2 (260 aa).

Over 1–41 (MIVLKWLFFTISPCDAAEPWQLGFQDAATPIMQGIIDLHHD) the chain is Mitochondrial intermembrane. Residues 42–62 (IFFFLILILVFVLWILVRALW) traverse the membrane as a helical segment. Topologically, residues 63 to 86 (HFHYKKNAIPQRIVHGTTIEILWT) are mitochondrial matrix. Residues 87–107 (IFPSIILMFIAIPSFALLYSM) form a helical membrane-spanning segment. The Mitochondrial intermembrane portion of the chain corresponds to 108 to 260 (DEVVVDPAIT…NQLIPQTGEA (153 aa)). The Cu cation site is built by histidine 187, cysteine 222, glutamate 224, cysteine 226, histidine 230, and methionine 233. Mg(2+) is bound at residue glutamate 224.

The protein belongs to the cytochrome c oxidase subunit 2 family. In terms of assembly, component of the cytochrome c oxidase (complex IV, CIV), a multisubunit enzyme composed of a catalytic core of 3 subunits and several supernumerary subunits. The complex exists as a monomer or a dimer and forms supercomplexes (SCs) in the inner mitochondrial membrane with ubiquinol-cytochrome c oxidoreductase (cytochrome b-c1 complex, complex III, CIII). Requires Cu cation as cofactor.

The protein resides in the mitochondrion inner membrane. It carries out the reaction 4 Fe(II)-[cytochrome c] + O2 + 8 H(+)(in) = 4 Fe(III)-[cytochrome c] + 2 H2O + 4 H(+)(out). Its function is as follows. Component of the cytochrome c oxidase, the last enzyme in the mitochondrial electron transport chain which drives oxidative phosphorylation. The respiratory chain contains 3 multisubunit complexes succinate dehydrogenase (complex II, CII), ubiquinol-cytochrome c oxidoreductase (cytochrome b-c1 complex, complex III, CIII) and cytochrome c oxidase (complex IV, CIV), that cooperate to transfer electrons derived from NADH and succinate to molecular oxygen, creating an electrochemical gradient over the inner membrane that drives transmembrane transport and the ATP synthase. Cytochrome c oxidase is the component of the respiratory chain that catalyzes the reduction of oxygen to water. Electrons originating from reduced cytochrome c in the intermembrane space (IMS) are transferred via the dinuclear copper A center (CU(A)) of subunit 2 and heme A of subunit 1 to the active site in subunit 1, a binuclear center (BNC) formed by heme A3 and copper B (CU(B)). The BNC reduces molecular oxygen to 2 water molecules using 4 electrons from cytochrome c in the IMS and 4 protons from the mitochondrial matrix. This Arabidopsis thaliana (Mouse-ear cress) protein is Cytochrome c oxidase subunit 2 (COX2).